Here is a 427-residue protein sequence, read N- to C-terminus: Enolase (427 aa).

Q162 is a binding site for (2R)-2-phosphoglycerate. E204 serves as the catalytic Proton donor. The Mg(2+) site is built by D241, E282, and D309. Residues K334, R363, S364, and K385 each contribute to the (2R)-2-phosphoglycerate site. K334 acts as the Proton acceptor in catalysis.

It belongs to the enolase family. Mg(2+) is required as a cofactor.

It localises to the cytoplasm. It is found in the secreted. The protein resides in the cell surface. It carries out the reaction (2R)-2-phosphoglycerate = phosphoenolpyruvate + H2O. Its pathway is carbohydrate degradation; glycolysis; pyruvate from D-glyceraldehyde 3-phosphate: step 4/5. In terms of biological role, catalyzes the reversible conversion of 2-phosphoglycerate (2-PG) into phosphoenolpyruvate (PEP). It is essential for the degradation of carbohydrates via glycolysis. This chain is Enolase, found in Parafrankia sp. (strain EAN1pec).